A 463-amino-acid polypeptide reads, in one-letter code: uncharacterized protein (463 aa).

Transmembrane regions (helical) follow at residues 21-40 (DFACNLIYATVSTYLLFFYT), 50-72 (AGTMFLVVRIIDALADPFIGTIV), 84-104 (PYLLFGAFPFVILAILCFTTP), 112-132 (LIYAYITYVGLSLTYTTINVP), 156-176 (LFANLGGLVVAFFVPLLAAYL), 186-206 (GWQLTMGILGMIGGCLLIFCF), 237-257 (LVVLSIFFIIIFGVNSISNSV), 271-291 (LVKWYGLIGSLPALVILPFIP), 311-331 (IIGLLALLFVPPSNVYLILVC), 334-354 (IAAAGSLTAGGYMWALIPETI), 367-387 (GLIYAIIGFFFKFGMALGGVV), and 408-428 (LMGILITTTIIPVFLLVLALI).

It belongs to the sodium:galactoside symporter (TC 2.A.2) family.

The protein resides in the cell membrane. This is an uncharacterized protein from Bacillus subtilis (strain 168).